The primary structure comprises 168 residues: Small ribosomal subunit protein uS5 (168 aa).

In terms of domain architecture, S5 DRBM spans 12-75; sequence YQEKLVSVTR…DQAKKNMVYI (64 aa).

Belongs to the universal ribosomal protein uS5 family. In terms of assembly, part of the 30S ribosomal subunit. Contacts proteins S4 and S8.

With S4 and S12 plays an important role in translational accuracy. Its function is as follows. Located at the back of the 30S subunit body where it stabilizes the conformation of the head with respect to the body. The chain is Small ribosomal subunit protein uS5 from Legionella pneumophila (strain Paris).